The sequence spans 93 residues: Putative membrane protein insertion efficiency factor (93 aa).

Positions 72-93 (VPEHFPSWRGPHPKTPSRKTPE) are disordered. A compositionally biased stretch (basic residues) spans 82 to 93 (PHPKTPSRKTPE).

The protein belongs to the UPF0161 family.

It is found in the cell membrane. In terms of biological role, could be involved in insertion of integral membrane proteins into the membrane. The sequence is that of Putative membrane protein insertion efficiency factor from Deinococcus geothermalis (strain DSM 11300 / CIP 105573 / AG-3a).